We begin with the raw amino-acid sequence, 292 residues long: MDKVKIALQYMLPKHLLSRLVGKLAAAEAGALTTAAIKWFIKQYKIDMSEAAQSEPEAYKSFNAFFTRALKPGIRPLDMDADIMVHPVDGAVSQLGPIKNGRIFQAKGHHYSSLTLLGDQAEDAKRFEGGDFATIYLAPKDYHRIHMPIKGTLSKMTYVPGELFSVNPLTARNVPGLFARNERVVAIFETELGPLAMVLVGATIVASIETVWAGTVTPPTGKQVFTWEYPTQGPDAITLDKGEEMGRFKLGSTVVMLFAKDAIATFAEGVEAEAVTRMGQAFANLKDVKHAD.

Active-site charge relay system; for autoendoproteolytic cleavage activity residues include Asp-89, His-146, and Ser-252. Ser-252 serves as the catalytic Schiff-base intermediate with substrate; via pyruvic acid; for decarboxylase activity. Position 252 is a pyruvic acid (Ser); by autocatalysis (Ser-252).

The protein belongs to the phosphatidylserine decarboxylase family. PSD-B subfamily. Prokaryotic type I sub-subfamily. Heterodimer of a large membrane-associated beta subunit and a small pyruvoyl-containing alpha subunit. The cofactor is pyruvate. Post-translationally, is synthesized initially as an inactive proenzyme. Formation of the active enzyme involves a self-maturation process in which the active site pyruvoyl group is generated from an internal serine residue via an autocatalytic post-translational modification. Two non-identical subunits are generated from the proenzyme in this reaction, and the pyruvate is formed at the N-terminus of the alpha chain, which is derived from the carboxyl end of the proenzyme. The autoendoproteolytic cleavage occurs by a canonical serine protease mechanism, in which the side chain hydroxyl group of the serine supplies its oxygen atom to form the C-terminus of the beta chain, while the remainder of the serine residue undergoes an oxidative deamination to produce ammonia and the pyruvoyl prosthetic group on the alpha chain. During this reaction, the Ser that is part of the protease active site of the proenzyme becomes the pyruvoyl prosthetic group, which constitutes an essential element of the active site of the mature decarboxylase.

It is found in the cell membrane. It catalyses the reaction a 1,2-diacyl-sn-glycero-3-phospho-L-serine + H(+) = a 1,2-diacyl-sn-glycero-3-phosphoethanolamine + CO2. The protein operates within phospholipid metabolism; phosphatidylethanolamine biosynthesis; phosphatidylethanolamine from CDP-diacylglycerol: step 2/2. In terms of biological role, catalyzes the formation of phosphatidylethanolamine (PtdEtn) from phosphatidylserine (PtdSer). The sequence is that of Phosphatidylserine decarboxylase proenzyme from Shewanella baltica (strain OS185).